The sequence spans 231 residues: Urease subunit gamma/beta (231 aa).

The tract at residues Met-1–Pro-101 is urease gamma. The tract at residues Gly-102–Ala-231 is urease beta.

The protein in the N-terminal section; belongs to the urease gamma subunit family. It in the C-terminal section; belongs to the urease beta subunit family. In terms of assembly, heterohexamer of 3 UreC (alpha) and 3 UreAB (gamma/beta) subunits.

It is found in the cytoplasm. The enzyme catalyses urea + 2 H2O + H(+) = hydrogencarbonate + 2 NH4(+). It functions in the pathway nitrogen metabolism; urea degradation; CO(2) and NH(3) from urea (urease route): step 1/1. The sequence is that of Urease subunit gamma/beta from Pseudomonas syringae pv. syringae (strain B728a).